The following is a 760-amino-acid chain: Catalase-peroxidase (760 aa).

A signal peptide spans 1-45; that stretch reads MKGTPFRSPHLYQEGSSCMHRTIRSVAAVLTVVLSATIPMVPAWS. The segment at residues 124–245 is a cross-link (tryptophyl-tyrosyl-methioninium (Trp-Tyr) (with M-271)); the sequence is WHGAGTYRTY…LAATQMGLIY (122 aa). His-125 serves as the catalytic Proton acceptor. Residues 245–271 constitute a cross-link (tryptophyl-tyrosyl-methioninium (Tyr-Met) (with W-124)); the sequence is YVNPEGPNGVPDPVAAARDIREAFGGM. His-286 contacts heme b.

Belongs to the peroxidase family. Peroxidase/catalase subfamily. Homodimer or homotetramer. Heme b is required as a cofactor. Post-translationally, formation of the three residue Trp-Tyr-Met cross-link is important for the catalase, but not the peroxidase activity of the enzyme.

The enzyme catalyses H2O2 + AH2 = A + 2 H2O. It catalyses the reaction 2 H2O2 = O2 + 2 H2O. Its function is as follows. Bifunctional enzyme with both catalase and broad-spectrum peroxidase activity. The sequence is that of Catalase-peroxidase from Granulibacter bethesdensis (strain ATCC BAA-1260 / CGDNIH1).